A 218-amino-acid polypeptide reads, in one-letter code: Guanylate kinase (218 aa).

The region spanning 5 to 188 is the Guanylate kinase-like domain; sequence GNLFILSAPS…ALLDLTTIVN (184 aa). Residue 12 to 19 coordinates ATP; sequence APSGAGKS.

Belongs to the guanylate kinase family.

It localises to the cytoplasm. The enzyme catalyses GMP + ATP = GDP + ADP. Essential for recycling GMP and indirectly, cGMP. In Colwellia psychrerythraea (strain 34H / ATCC BAA-681) (Vibrio psychroerythus), this protein is Guanylate kinase.